The sequence spans 275 residues: Ribosomal RNA small subunit methyltransferase A (275 aa).

Asn27, Leu29, Gly54, Glu76, Asp102, and Asn123 together coordinate S-adenosyl-L-methionine.

The protein belongs to the class I-like SAM-binding methyltransferase superfamily. rRNA adenine N(6)-methyltransferase family. RsmA subfamily.

The protein localises to the cytoplasm. It catalyses the reaction adenosine(1518)/adenosine(1519) in 16S rRNA + 4 S-adenosyl-L-methionine = N(6)-dimethyladenosine(1518)/N(6)-dimethyladenosine(1519) in 16S rRNA + 4 S-adenosyl-L-homocysteine + 4 H(+). Specifically dimethylates two adjacent adenosines (A1518 and A1519) in the loop of a conserved hairpin near the 3'-end of 16S rRNA in the 30S particle. May play a critical role in biogenesis of 30S subunits. The sequence is that of Ribosomal RNA small subunit methyltransferase A from Chelativorans sp. (strain BNC1).